The primary structure comprises 180 residues: ATP-dependent protease subunit HslV (180 aa).

Thr-6 is a catalytic residue. Positions 162, 165, and 168 each coordinate Na(+).

Belongs to the peptidase T1B family. HslV subfamily. A double ring-shaped homohexamer of HslV is capped on each side by a ring-shaped HslU homohexamer. The assembly of the HslU/HslV complex is dependent on binding of ATP.

It localises to the cytoplasm. It carries out the reaction ATP-dependent cleavage of peptide bonds with broad specificity.. Allosterically activated by HslU binding. Protease subunit of a proteasome-like degradation complex believed to be a general protein degrading machinery. The polypeptide is ATP-dependent protease subunit HslV (Oleidesulfovibrio alaskensis (strain ATCC BAA-1058 / DSM 17464 / G20) (Desulfovibrio alaskensis)).